Here is a 23-residue protein sequence, read N- to C-terminus: Basic phospholipase A2 Smb-N6 (23 aa).

The protein belongs to the phospholipase A2 family. Group II subfamily. The cofactor is Ca(2+). Post-translationally, contains 7 disulfide bonds. In terms of tissue distribution, expressed by the venom gland.

The protein resides in the secreted. It catalyses the reaction a 1,2-diacyl-sn-glycero-3-phosphocholine + H2O = a 1-acyl-sn-glycero-3-phosphocholine + a fatty acid + H(+). In terms of biological role, snake venom phospholipase A2 (PLA2) that shows myotoxic activities. PLA2 catalyzes the calcium-dependent hydrolysis of the 2-acyl groups in 3-sn-phosphoglycerides. In Sistrurus miliarius barbouri (Dusky pigmy rattlesnake), this protein is Basic phospholipase A2 Smb-N6.